The sequence spans 1849 residues: Breast cancer type 1 susceptibility protein homolog (1849 aa).

An N-acetylmethionine modification is found at Met-1. The RING-type zinc finger occupies Cys-24 to Lys-65. Residue Ser-114 is modified to Phosphoserine. Residues Lys-301 and Lys-339 each participate in a glycyl lysine isopeptide (Lys-Gly) (interchain with G-Cter in SUMO2) cross-link. Ser-395, Ser-398, Ser-423, and Ser-434 each carry phosphoserine. Residues Lys-457 and Lys-517 each participate in a glycyl lysine isopeptide (Lys-Gly) (interchain with G-Cter in SUMO2) cross-link. Over residues Lys-530–Cys-542 the composition is skewed to basic and acidic residues. Disordered stretches follow at residues Lys-530 to Arg-558 and Glu-620 to Gln-662. Residues Ser-691, Ser-711, and Ser-720 each carry the phosphoserine modification. A disordered region spans residues Ser-882–His-912. Residues Gln-888–Ser-910 show a composition bias toward basic and acidic residues. Lys-981 participates in a covalent cross-link: Glycyl lysine isopeptide (Lys-Gly) (interchain with G-Cter in SUMO2). A Phosphoserine; by CHEK2 modification is found at Ser-982. Residue Ser-1002 is modified to Phosphoserine. Residues Asn-1036–Asn-1061 are compositionally biased toward low complexity. Residues Asn-1036 to Arg-1070 form a disordered region. Residue Lys-1073 forms a Glycyl lysine isopeptide (Lys-Gly) (interchain with G-Cter in SUMO2) linkage. A phosphoserine mark is found at Ser-1138, Ser-1184, Ser-1211, Ser-1212, Ser-1274, Ser-1323, Ser-1330, Ser-1336, and Ser-1382. A disordered region spans residues Phe-1172 to Ser-1211. Disordered stretches follow at residues Tyr-1321–Thr-1389, Val-1412–Gly-1433, and Ser-1452–Ala-1493. A compositionally biased stretch (acidic residues) spans Ser-1336–Leu-1360. 2 stretches are compositionally biased toward polar residues: residues Glu-1370–Thr-1389 and Ser-1418–Ala-1429. A Phosphothreonine modification is found at Thr-1389. Residues Arg-1392–Gln-1419 form an interaction with PALB2 region. A phosphoserine mark is found at Ser-1418, Ser-1452, and Ser-1518. Disordered regions lie at residues Ser-1562–Ala-1590 and Arg-1621–Lys-1640. Composition is skewed to basic and acidic residues over residues His-1566–His-1582 and Arg-1621–Glu-1631. 2 BRCT domains span residues Arg-1642–Val-1729 and Arg-1749–Val-1848.

Heterodimer with BARD1. Part of the BRCA1-associated genome surveillance complex (BASC), which contains BRCA1, MSH2, MSH6, MLH1, ATM, BLM, PMS2 and the MRE11-RAD50-NBN protein (MRN) complex. This association could be a dynamic process changing throughout the cell cycle and within subnuclear domains. Component of the BRCA1-A complex, at least composed of BRCA1, BARD1, UIMC1/RAP80, ABRAXAS1, BRCC3/BRCC36, BABAM2 and BABAM1/NBA1. Interacts (via the BRCT domains) with ABRAXAS1 (phosphorylated form); this is important for recruitment to sites of DNA damage. Can form a heterotetramer with two molecules of ABRAXAS1 (phosphorylated form). Component of the BRCA1-RBBP8 complex. Interacts (via the BRCT domains) with RBBP8 ('Ser-327' phosphorylated form); the interaction ubiquitinates RBBP8, regulates CHEK1 activation, and involves RBBP8 in BRCA1-dependent G2/M checkpoint control on DNA damage. Associates with RNA polymerase II holoenzyme. Interacts with SMC1A, NELFB, DCLRE1C, CLSPN. CHEK1, CHEK2, BAP1, BRCC3, UBXN1 and PCLAF. Interacts (via BRCT domains) with BRIP1 (phosphorylated form). Interacts with FANCD2 (ubiquitinated form). Interacts with H2AX (phosphorylated on 'Ser-140'). Interacts (via the BRCT domains) with ACACA (phosphorylated form); the interaction prevents dephosphorylation of ACACA. Part of a BRCA complex containing BRCA1, BRCA2 and PALB2. Interacts directly with PALB2; the interaction is essential for its function in HRR. Interacts directly with BRCA2; the interaction occurs only in the presence of PALB2 which serves as the bridging protein. Interacts (via the BRCT domains) with LMO4; the interaction represses the transcriptional activity of BRCA1. Interacts (via the BRCT domains) with CCAR2 (via N-terminus); the interaction represses the transcriptional activator activity of BRCA1. Interacts with EXD2. Interacts (via C-terminus) with DHX9; this interaction is direct and links BRCA1 to the RNA polymerase II holoenzyme. Interacts with DNA helicase ZGRF1; the interaction is increased following DNA damage induction. In terms of processing, phosphorylated in response to IR, UV, and various stimuli that cause checkpoint activation, probably by ATM or ATR. Phosphorylation at Ser-982 by CHEK2 regulates mitotic spindle assembly. Phosphorylation by AURKA regulates centrosomal microtubule nucleation. Autoubiquitinated, undergoes 'Lys-6'-linked polyubiquitination. 'Lys-6'-linked polyubiquitination does not promote degradation.

The protein resides in the nucleus. Its subcellular location is the chromosome. The protein localises to the cytoplasm. The enzyme catalyses S-ubiquitinyl-[E2 ubiquitin-conjugating enzyme]-L-cysteine + [acceptor protein]-L-lysine = [E2 ubiquitin-conjugating enzyme]-L-cysteine + N(6)-ubiquitinyl-[acceptor protein]-L-lysine.. It participates in protein modification; protein ubiquitination. Its function is as follows. E3 ubiquitin-protein ligase that specifically mediates the formation of 'Lys-6'-linked polyubiquitin chains and plays a central role in DNA repair by facilitating cellular responses to DNA damage. It is unclear whether it also mediates the formation of other types of polyubiquitin chains. The BRCA1-BARD1 heterodimer coordinates a diverse range of cellular pathways such as DNA damage repair, ubiquitination and transcriptional regulation to maintain genomic stability. Regulates centrosomal microtubule nucleation. Required for appropriate cell cycle arrests after ionizing irradiation in both the S-phase and the G2 phase of the cell cycle. Required for FANCD2 targeting to sites of DNA damage. Inhibits lipid synthesis by binding to inactive phosphorylated ACACA and preventing its dephosphorylation. Contributes to homologous recombination repair (HRR) via its direct interaction with PALB2, fine-tunes recombinational repair partly through its modulatory role in the PALB2-dependent loading of BRCA2-RAD51 repair machinery at DNA breaks. Component of the BRCA1-RBBP8 complex which regulates CHEK1 activation and controls cell cycle G2/M checkpoints on DNA damage via BRCA1-mediated ubiquitination of RBBP8. Acts as a transcriptional activator. This is Breast cancer type 1 susceptibility protein homolog (BRCA1) from Bos taurus (Bovine).